The sequence spans 426 residues: 3-phosphoshikimate 1-carboxyvinyltransferase (426 aa).

Positions 22, 23, and 27 each coordinate 3-phosphoshikimate. Phosphoenolpyruvate is bound at residue lysine 22. Residues glycine 96 and arginine 124 each contribute to the phosphoenolpyruvate site. 3-phosphoshikimate contacts are provided by serine 170, serine 171, glutamine 172, serine 198, aspartate 314, asparagine 337, and lysine 341. Glutamine 172 serves as a coordination point for phosphoenolpyruvate. Aspartate 314 functions as the Proton acceptor in the catalytic mechanism. Phosphoenolpyruvate-binding residues include arginine 345, arginine 387, and lysine 412.

The protein belongs to the EPSP synthase family. Monomer.

It localises to the cytoplasm. The enzyme catalyses 3-phosphoshikimate + phosphoenolpyruvate = 5-O-(1-carboxyvinyl)-3-phosphoshikimate + phosphate. Its pathway is metabolic intermediate biosynthesis; chorismate biosynthesis; chorismate from D-erythrose 4-phosphate and phosphoenolpyruvate: step 6/7. Its function is as follows. Catalyzes the transfer of the enolpyruvyl moiety of phosphoenolpyruvate (PEP) to the 5-hydroxyl of shikimate-3-phosphate (S3P) to produce enolpyruvyl shikimate-3-phosphate and inorganic phosphate. The protein is 3-phosphoshikimate 1-carboxyvinyltransferase of Shewanella pealeana (strain ATCC 700345 / ANG-SQ1).